Here is a 273-residue protein sequence, read N- to C-terminus: Putative pyruvate, phosphate dikinase regulatory protein (273 aa).

G149–T156 serves as a coordination point for ADP.

Belongs to the pyruvate, phosphate/water dikinase regulatory protein family. PDRP subfamily.

The enzyme catalyses N(tele)-phospho-L-histidyl/L-threonyl-[pyruvate, phosphate dikinase] + ADP = N(tele)-phospho-L-histidyl/O-phospho-L-threonyl-[pyruvate, phosphate dikinase] + AMP + H(+). It catalyses the reaction N(tele)-phospho-L-histidyl/O-phospho-L-threonyl-[pyruvate, phosphate dikinase] + phosphate + H(+) = N(tele)-phospho-L-histidyl/L-threonyl-[pyruvate, phosphate dikinase] + diphosphate. Bifunctional serine/threonine kinase and phosphorylase involved in the regulation of the pyruvate, phosphate dikinase (PPDK) by catalyzing its phosphorylation/dephosphorylation. The chain is Putative pyruvate, phosphate dikinase regulatory protein from Rickettsia akari (strain Hartford).